A 188-amino-acid polypeptide reads, in one-letter code: Fructose-1-phosphate phosphatase YqaB (188 aa).

The Nucleophile role is filled by Asp11. Mg(2+) is bound by residues Asp11, Asp13, and Asp167. 11–13 is a substrate binding site; it reads DMD.

Belongs to the HAD-like hydrolase superfamily. CbbY/CbbZ/Gph/YieH family. Mg(2+) is required as a cofactor. Mn(2+) serves as cofactor. The cofactor is Co(2+). Requires Zn(2+) as cofactor.

Functionally, catalyzes strongly the dephosphorylation of fructose-1-phosphate (Fru1P) and slightly the dephosphorylation of 6-phosphogluconate (6P-Glu). It has low beta-phosphoglucomutase activity. The chain is Fructose-1-phosphate phosphatase YqaB (yqaB) from Escherichia coli (strain K12).